Reading from the N-terminus, the 374-residue chain is Flavonoid O-methyltransferase-like protein Os11g0303600 (374 aa).

S-adenosyl-L-homocysteine contacts are provided by D242, D262, M263, and K276. H280 serves as the catalytic Proton acceptor.

It belongs to the class I-like SAM-binding methyltransferase superfamily. Cation-independent O-methyltransferase family. COMT subfamily.

This Oryza sativa subsp. japonica (Rice) protein is Flavonoid O-methyltransferase-like protein Os11g0303600.